Consider the following 1080-residue polypeptide: Myocardin-related transcription factor B (1080 aa).

The RPEL 1 repeat unit spans residues 40–65 (EVLQLRLQQRRTREQLVDQGIMPPLK). At Ser66 the chain carries Phosphoserine. RPEL repeat units follow at residues 84–109 (NFLK…EETF) and 128–153 (DDLN…PVDS). Disordered stretches follow at residues 170-222 (THGE…AQFT), 234-311 (TPLT…EPQM), 352-384 (PIKT…SSLD), and 477-501 (PHVE…LSTD). Composition is skewed to polar residues over residues 188–200 (QPAS…SAAS) and 240–259 (QPPT…SSAK). Basic and acidic residues predominate over residues 272-287 (NPNDKHRSKKCKDPKP). Residues 358 to 370 (NSSSGSNSGSSSS) are compositionally biased toward low complexity. In terms of domain architecture, SAP spans 383–417 (LDDLKVSELKTELKLRGLPVSGTKPDLIERLKPYQ). 3 positions are modified to phosphoserine: Ser531, Ser535, and Ser537. Positions 539 to 594 (SSSTLSTLELDAAEKDRKLQEKEKQIEELKRKLEQEQKLVEVLKMQLEVEKRGQQR) form a coiled coil. A required for interaction with itself and with MRTFA region spans residues 557-585 (LQEKEKQIEELKRKLEQEQKLVEVLKMQL). Disordered regions lie at residues 588–646 (EKRG…SVGQ) and 794–846 (LQYQ…PQQF). Over residues 595–606 (PPDPQPSDPPHP) the composition is skewed to pro residues. Lys622 is covalently cross-linked (Glycyl lysine isopeptide (Lys-Gly) (interchain with G-Cter in SUMO1)). Over residues 794-821 (LQYQRQPGPTNQQPFVSKTSNPALQSRT) the composition is skewed to polar residues. Phosphoserine is present on Ser913. Residues 969–988 (GTLPSATDTGPLQNSSEDRE) form a disordered region. The span at 972–983 (PSATDTGPLQNS) shows a compositional bias: polar residues.

In terms of assembly, interacts with MRTFA and SRF. O-glycosylated. As to expression, widely expressed. High expression in heart, brain and testis. Lower expression in lung, liver and kidney.

Its subcellular location is the nucleus. In terms of biological role, acts as a transcriptional coactivator of serum response factor (SRF). Required for skeletal myogenic differentiation. The protein is Myocardin-related transcription factor B (Mrtfb) of Mus musculus (Mouse).